The primary structure comprises 386 residues: Copper-containing nitrite reductase (386 aa).

The N-terminal stretch at 1–18 is a signal peptide; that stretch reads MKRQALAAIIASMFALAA. Cysteine 19 is lipidated: N-palmitoyl cysteine. Cysteine 19 is lipidated: S-diacylglycerol cysteine. Plastocyanin-like domains are found at residues 97–191 and 241–342; these read WTFD…ILVE and GHVG…LKVE. The Cu cation site is built by histidine 130, histidine 135, histidine 170, cysteine 171, histidine 179, and methionine 184. Residue histidine 135 coordinates substrate. Histidine 276 serves as a coordination point for substrate. A Cu cation-binding site is contributed by histidine 325. The tract at residues 363–386 is disordered; that stretch reads GAAPAASAPAASAPAASAPAKSDY. Low complexity predominate over residues 364-386; sequence AAPAASAPAASAPAASAPAKSDY. 3 tandem repeats follow at residues 367 to 371, 372 to 376, and 377 to 381. The tract at residues 367-381 is 3 X 5 AA tandem repeats of A-A-S-A-P; sequence AASAPAASAPAASAP.

Belongs to the multicopper oxidase family. As to quaternary structure, homotrimer. The cofactor is Cu(+). Requires Cu(2+) as cofactor.

Its subcellular location is the cell outer membrane. The enzyme catalyses nitric oxide + Fe(III)-[cytochrome c] + H2O = Fe(II)-[cytochrome c] + nitrite + 2 H(+). Its function is as follows. Catalyzes the reduction of nitrite to nitric oxide (NO). It could be essential for growth and survival in oxygen-depleted environments. The polypeptide is Copper-containing nitrite reductase (aniA) (Neisseria meningitidis serogroup A / serotype 4A (strain DSM 15465 / Z2491)).